The following is a 272-amino-acid chain: Shikimate dehydrogenase (NADP(+)) (272 aa).

Residues Ser14 to Ser16 and Thr61 each bind shikimate. The Proton acceptor role is filled by Lys65. Glu77 provides a ligand contact to NADP(+). Residues Asn86 and Asp102 each contribute to the shikimate site. NADP(+) contacts are provided by residues Gly126 to Ala130, Asn149 to Arg154, and Met213. Tyr215 contributes to the shikimate binding site. Gly237 provides a ligand contact to NADP(+).

This sequence belongs to the shikimate dehydrogenase family. In terms of assembly, homodimer.

It carries out the reaction shikimate + NADP(+) = 3-dehydroshikimate + NADPH + H(+). The protein operates within metabolic intermediate biosynthesis; chorismate biosynthesis; chorismate from D-erythrose 4-phosphate and phosphoenolpyruvate: step 4/7. Functionally, involved in the biosynthesis of the chorismate, which leads to the biosynthesis of aromatic amino acids. Catalyzes the reversible NADPH linked reduction of 3-dehydroshikimate (DHSA) to yield shikimate (SA). This is Shikimate dehydrogenase (NADP(+)) from Photorhabdus laumondii subsp. laumondii (strain DSM 15139 / CIP 105565 / TT01) (Photorhabdus luminescens subsp. laumondii).